A 318-amino-acid polypeptide reads, in one-letter code: Malonyl CoA-acyl carrier protein transacylase, mitochondrial (318 aa).

The protein belongs to the FabD family.

The protein localises to the mitochondrion. The catalysed reaction is holo-[ACP] + malonyl-CoA = malonyl-[ACP] + CoA. Its pathway is lipid metabolism; fatty acid biosynthesis. Functionally, involved in biosynthesis of fatty acids in mitochondria. The sequence is that of Malonyl CoA-acyl carrier protein transacylase, mitochondrial (mct1) from Schizosaccharomyces pombe (strain 972 / ATCC 24843) (Fission yeast).